A 190-amino-acid polypeptide reads, in one-letter code: Threonylcarbamoyl-AMP synthase (190 aa).

In terms of domain architecture, YrdC-like spans 7–190 (TGSSAAVVDL…ALTGELFRQG (184 aa)).

The protein belongs to the SUA5 family. TsaC subfamily.

Its subcellular location is the cytoplasm. It catalyses the reaction L-threonine + hydrogencarbonate + ATP = L-threonylcarbamoyladenylate + diphosphate + H2O. In terms of biological role, required for the formation of a threonylcarbamoyl group on adenosine at position 37 (t(6)A37) in tRNAs that read codons beginning with adenine. Catalyzes the conversion of L-threonine, HCO(3)(-)/CO(2) and ATP to give threonylcarbamoyl-AMP (TC-AMP) as the acyladenylate intermediate, with the release of diphosphate. This is Threonylcarbamoyl-AMP synthase from Salmonella typhi.